Reading from the N-terminus, the 96-residue chain is UPF0729 protein AGAP000931 (96 aa).

Residues Val-65–Leu-96 form a disordered region. A compositionally biased stretch (low complexity) spans Thr-75 to Leu-96.

Belongs to the UPF0729 family.

The sequence is that of UPF0729 protein AGAP000931 from Anopheles gambiae (African malaria mosquito).